A 592-amino-acid polypeptide reads, in one-letter code: N-acetyltransferase ESCO2 (592 aa).

Phosphoserine is present on residues Ser-41 and Ser-85. Positions 267–294 (KSSVKVQNARSKNEEKLRKNPSGAVVSS) are disordered. Ser-309 carries the post-translational modification Phosphoserine. The segment at 384–408 (TVCKSCGMIYTASNPEDEIQHLQHH) adopts a CCHH-type zinc-finger fold.

The protein belongs to the acetyltransferase family. ECO subfamily.

It localises to the nucleus. Its subcellular location is the chromosome. The enzyme catalyses L-lysyl-[protein] + acetyl-CoA = N(6)-acetyl-L-lysyl-[protein] + CoA + H(+). Its function is as follows. Acetyltransferase required for the establishment of sister chromatid cohesion. Couples the processes of cohesion and DNA replication to ensure that only sister chromatids become paired together. In contrast to the structural cohesins, the deposition and establishment factors are required only during the S phase. Acetylates the cohesin component SMC3. The polypeptide is N-acetyltransferase ESCO2 (Esco2) (Mus musculus (Mouse)).